The sequence spans 449 residues: Nucleoporin NUP42 (449 aa).

The C3H1-type zinc finger occupies 1–25 (MAICSFFLQGRCRYGEKCWNEHPRG). Disordered stretches follow at residues 22 to 84 (HPRG…GFDN) and 218 to 237 (DMTSGYNGQQKPAFGSSSFP). Polar residues-rich tracts occupy residues 47-83 (WGSSSQRYVQPSSFSRSTTWVNRDNEKPSSGSHSGFD) and 218-227 (DMTSGYNGQQ). FG repeat units follow at residues 231–232 (FG), 274–275 (FG), 284–285 (FG), 305–306 (FG), 314–315 (FG), 335–336 (FG), and 347–348 (FG).

As to quaternary structure, probable component of the nuclear pore complex (NPC).

Its subcellular location is the nucleus. It is found in the nuclear pore complex. The protein localises to the nucleus membrane. Required for the export of mRNAs containing poly(A) tails from the nucleus into the cytoplasm. This Xenopus tropicalis (Western clawed frog) protein is Nucleoporin NUP42 (nup42).